The chain runs to 123 residues: Ribosome-binding factor A (123 aa).

This sequence belongs to the RbfA family. In terms of assembly, monomer. Binds 30S ribosomal subunits, but not 50S ribosomal subunits or 70S ribosomes.

The protein localises to the cytoplasm. Functionally, one of several proteins that assist in the late maturation steps of the functional core of the 30S ribosomal subunit. Associates with free 30S ribosomal subunits (but not with 30S subunits that are part of 70S ribosomes or polysomes). Required for efficient processing of 16S rRNA. May interact with the 5'-terminal helix region of 16S rRNA. This Chlamydia trachomatis serovar A (strain ATCC VR-571B / DSM 19440 / HAR-13) protein is Ribosome-binding factor A.